The primary structure comprises 421 residues: Battenin (421 aa).

5 consecutive transmembrane segments (helical) span residues 13–35, 47–67, 74–96, 101–123, and 137–157; these read SFHF…SGNL, IILW…TFLI, LKIV…SVYV, CIAA…LSYM, and GTGI…AAGL. N-linked (GlcNAc...) asparagine glycosylation is present at Asn-159. The helical transmembrane segment at 161–181 threads the bilayer; that stretch reads TIFYMMLPTVAVYFLLFFFGL. A disordered region spans residues 190–211; it reads DRTDNHNNSNNSSNNSKYTEKQ. Residues 195 to 205 are compositionally biased toward low complexity; that stretch reads HNNSNNSSNNS. 4 N-linked (GlcNAc...) asparagine glycosylation sites follow: Asn-196, Asn-199, Asn-200, and Asn-203. A run of 5 helical transmembrane segments spans residues 248–268, 284–304, 313–333, 338–358, and 382–402; these read LVWF…VASV, FFIA…VLIS, IKHI…WIIQ, MVTS…LGGA, and INYA…FILV.

Belongs to the battenin family.

The protein localises to the lysosome membrane. The protein is Battenin (cln3) of Dictyostelium discoideum (Social amoeba).